The following is a 240-amino-acid chain: Insulin-like growth factor-binding protein 3 receptor (240 aa).

A signal peptide spans 1–38 (MGSCQAGHNLHLCLAHHPPLVCATLILLLLGLSGLGLG). Topologically, residues 39 to 204 (GFLLTHTTGL…SEELALCGSR (166 aa)) are extracellular. N-linked (GlcNAc...) asparagine glycosylation occurs at asparagine 167. The chain crosses the membrane as a helical span at residues 205-225 (VLGLGFFLVLLCGLLCCTTAV). The Cytoplasmic portion of the chain corresponds to 226–240 (CFHPRPEFHWSRTRL).

Interacts with IGFBP3. Interacts with CASP8.

It is found in the cell membrane. Cell death receptor specific for IGFBP3, may mediate caspase-8-dependent apoptosis upon ligand binding. This Mus musculus (Mouse) protein is Insulin-like growth factor-binding protein 3 receptor (Tmem219).